The following is a 181-amino-acid chain: Malignant T-cell-amplified sequence 2 (181 aa).

In terms of domain architecture, PUA spans 92-171 (LPHQQVDKGA…IGIENIHYLN (80 aa)).

It belongs to the MCTS1 family.

The protein resides in the cytoplasm. This Homo sapiens (Human) protein is Malignant T-cell-amplified sequence 2.